The sequence spans 589 residues: Poly(3-hydroxyalkanoate) polymerase subunit PhaC (589 aa).

The disordered stretch occupies residues 1–23 (MATGKGAAASTQEGKSQPFKVTP). C319 is an active-site residue.

It belongs to the PHA/PHB synthase family. Type I PhaC subfamily. Monomer.

Its subcellular location is the cytoplasm. It catalyses the reaction (3R)-3-hydroxybutanoyl-CoA + [(3R)-hydroxybutanoate](n) = [(3R)-hydroxybutanoate](n+1) + CoA. The protein operates within biopolymer metabolism; poly-(R)-3-hydroxybutanoate biosynthesis. Its function is as follows. Polymerizes (R)-3-hydroxybutyryl-CoA to create polyhydroxybutyrate (PHB) which consists of thousands of hydroxybutyrate molecules linked end to end. PHB serves as an intracellular energy reserve material when cells grow under conditions of nutrient limitation. The protein is Poly(3-hydroxyalkanoate) polymerase subunit PhaC of Cupriavidus necator (strain ATCC 17699 / DSM 428 / KCTC 22496 / NCIMB 10442 / H16 / Stanier 337) (Ralstonia eutropha).